A 1050-amino-acid chain; its full sequence is Antibiotic efflux pump membrane transporter ArpB (1050 aa).

A run of 12 helical transmembrane segments spans residues 10–30, 339–359, 370–390, 393–413, 440–460, 472–492, 539–559, 871–891, 893–913, 923–943, 972–992, and 1004–1024; these read IFAW…ILKL, GVIH…YLFL, MTVP…GFSI, LTMF…IVVV, GALV…AFFG, ITIV…TPAL, VPFL…FARI, MPAL…ALYE, WSIP…ALIA, VYFL…AILI, IIMT…ASGA, and VIGG…LFFV.

It belongs to the resistance-nodulation-cell division (RND) (TC 2.A.6) family.

It is found in the cell inner membrane. In terms of biological role, the inner membrane transporter component of an antibiotic efflux pump. Confers resistance to numerous structurally unrelated antibiotics such as carbenicillin, chloramphenicol, erythromycin, novobiocin, streptomycin and tetracycline. Is not involved in organic solvent efflux. The protein is Antibiotic efflux pump membrane transporter ArpB (arpB) of Pseudomonas putida (Arthrobacter siderocapsulatus).